We begin with the raw amino-acid sequence, 361 residues long: uncharacterized protein (361 aa).

The span at 1–10 (MRRYLKKAKP) shows a compositional bias: basic residues. Disordered stretches follow at residues 1–82 (MRRY…SSFH) and 94–147 (ALSH…VNTS). Basic and acidic residues-rich tracts occupy residues 44-57 (KEKN…KYEN) and 120-134 (FTKK…ESEL). Residues 135–147 (QTRSSPPLPVNTS) are compositionally biased toward polar residues. Residues 295–349 (NILTMDEQIQRLKEAIASEKLQQEERSQIIKSLMEEELEINEQEEKIKHSFIDLD) adopt a coiled-coil conformation.

It localises to the cytoplasm. Its subcellular location is the nucleus. This is an uncharacterized protein from Schizosaccharomyces pombe (strain 972 / ATCC 24843) (Fission yeast).